Consider the following 392-residue polypeptide: Pannexin-3 (392 aa).

Topologically, residues 1 to 39 (MSLAHTAAEYMLSDALLPDRRGSRLKGLRLELPLDKMVK) are cytoplasmic. The helical transmembrane segment at 40 to 60 (FITVGFPLLLMSLAFAQEFSS) threads the bilayer. The Extracellular portion of the chain corresponds to 61 to 113 (GSPISCFSPSNFSVRQAAYVDSSCWDSLAHHTQDKAGQYKVKSLWPHKALPYS). A glycan (N-linked (GlcNAc...) asparagine) is linked at Asn71. The helical transmembrane segment at 114–134 (LLALAVAMYLPVLLWQYVAVP) threads the bilayer. Residues 135-215 (SLSSDLLFII…VATYLLRNAL (81 aa)) are Cytoplasmic-facing. Residues 216–236 (LLLFTSATYLYLGQFHLDVFF) form a helical membrane-spanning segment. Residues 237–267 (QDEFNCFIKTGLLHDETHVPELITCRLTSLS) are Extracellular-facing. Residues 268 to 288 (VFQIVSVSSAAIYTILVPVII) traverse the membrane as a helical segment. Over 289 to 392 (YNLTRLCRWD…LTQHTYDEHA (104 aa)) the chain is Cytoplasmic.

Belongs to the pannexin family. As to quaternary structure, homoheptameric. N-glycosylation may play a role in cell surface targeting. Expressed in skin, cartilage, heart, lung, liver, spleen, thymus and kidney. Not expressed in brain. Expressed in calvarial cells.

The protein resides in the cell membrane. It is found in the endoplasmic reticulum membrane. The catalysed reaction is Ca(2+)(in) = Ca(2+)(out). It catalyses the reaction ATP(in) = ATP(out). Functionally, regulator of osteoblast differentiation by functionning as a Ca(2+) channel in the endoplasmic reticulum which regulates calmodulin (CaM) pathways. Allows ATP release into the extracellular space and activation or purinergic receptors. The protein is Pannexin-3 (Panx3) of Mus musculus (Mouse).